We begin with the raw amino-acid sequence, 120 residues long: NAD(P)H-quinone oxidoreductase subunit 3, chloroplastic (120 aa).

Helical transmembrane passes span 10–30, 64–84, and 89–109; these read FLVF…ASKL, MFAL…PWAV, and MGFI…VGLV.

It belongs to the complex I subunit 3 family. NDH is composed of at least 16 different subunits, 5 of which are encoded in the nucleus.

The protein localises to the plastid. It is found in the chloroplast thylakoid membrane. It carries out the reaction a plastoquinone + NADH + (n+1) H(+)(in) = a plastoquinol + NAD(+) + n H(+)(out). The enzyme catalyses a plastoquinone + NADPH + (n+1) H(+)(in) = a plastoquinol + NADP(+) + n H(+)(out). In terms of biological role, NDH shuttles electrons from NAD(P)H:plastoquinone, via FMN and iron-sulfur (Fe-S) centers, to quinones in the photosynthetic chain and possibly in a chloroplast respiratory chain. The immediate electron acceptor for the enzyme in this species is believed to be plastoquinone. Couples the redox reaction to proton translocation, and thus conserves the redox energy in a proton gradient. The polypeptide is NAD(P)H-quinone oxidoreductase subunit 3, chloroplastic (Chlorokybus atmophyticus (Soil alga)).